Consider the following 138-residue polypeptide: Eukaryotic translation initiation factor 1A (138 aa).

The span at 1-15 (MPKNKGKGGKNRRRG) shows a compositional bias: basic residues. Positions 1 to 28 (MPKNKGKGGKNRRRGKNENENEKRELTY) are disordered. Positions 16 to 27 (KNENENEKRELT) are enriched in basic and acidic residues. An S1-like domain is found at 22–96 (EKRELTYAEE…EKGDVILKYT (75 aa)).

This sequence belongs to the eIF-1A family.

Functionally, seems to be required for maximal rate of protein biosynthesis. Enhances ribosome dissociation into subunits and stabilizes the binding of the initiator Met-tRNA(I) to 40 S ribosomal subunits. The polypeptide is Eukaryotic translation initiation factor 1A (tif11) (Schizosaccharomyces pombe (strain 972 / ATCC 24843) (Fission yeast)).